We begin with the raw amino-acid sequence, 321 residues long: Cytochrome c biogenesis protein CcsA (321 aa).

Transmembrane regions (helical) follow at residues 17 to 37 (VVSI…FVGL), 48 to 68 (TFFC…HLPI), 71 to 91 (LYES…VPYF), 98 to 118 (LSTI…WGLL), 143 to 163 (MVSG…LLVI), 225 to 245 (ILSI…VWAN), 259 to 273 (TWAF…IYFH), and 286 to 306 (AIVA…VNLL).

This sequence belongs to the CcmF/CycK/Ccl1/NrfE/CcsA family. May interact with Ccs1.

Its subcellular location is the plastid. The protein resides in the chloroplast thylakoid membrane. Functionally, required during biogenesis of c-type cytochromes (cytochrome c6 and cytochrome f) at the step of heme attachment. The sequence is that of Cytochrome c biogenesis protein CcsA from Populus trichocarpa (Western balsam poplar).